We begin with the raw amino-acid sequence, 130 residues long: MSEKFEVKDLNMKPGMSLKIKGKIHNDVDRFLINLGQGKETLNLHFNPRFDESTIVCNTSEGGRWGQEQRENHMCFSPGSEVKITITFQDKDFKVTLPDGHQLTFPNRLGHNQLHYLSMGGLQISSFKLE.

Residues 4-130 form the Galectin domain; it reads KFEVKDLNMK…GLQISSFKLE (127 aa). 65–71 is a binding site for a beta-D-galactoside; sequence WGQEQRE.

In terms of assembly, homodimer.

Functionally, this protein binds beta-galactoside. Its physiological function is not yet known. In Mus musculus (Mouse), this protein is Galectin-2 (Lgals2).